We begin with the raw amino-acid sequence, 346 residues long: 3-keto-steroid reductase ERG27 (346 aa).

The NADP(+) site is built by Leu-19, Thr-42, and Lys-48. Catalysis depends on proton donor residues Ser-182 and Tyr-205. NADP(+) contacts are provided by Tyr-205, Lys-209, and Ser-241. Lys-209 (lowers pKa of active site Tyr) is an active-site residue. Residues Phe-242–Leu-262 traverse the membrane as a helical segment. An N-linked (GlcNAc...) asparagine glycan is attached at Asn-272.

Belongs to the short-chain dehydrogenases/reductases (SDR) family. ERG27 subfamily. As to quaternary structure, heterotetramer of ERG25, ERG26, ERG27 and ERG28. ERG28 acts as a scaffold to tether ERG27 and other 4,4-demethylation-related enzymes, forming a demethylation enzyme complex, in the endoplasmic reticulum. Interacts with ERG25 and ERG28. Also interacts with ERG7, but only in lipid particles.

The protein resides in the endoplasmic reticulum membrane. It localises to the lipid droplet. The enzyme catalyses 3-dehydro-4alpha-methylzymosterol + NADPH + H(+) = 4alpha-methylzymosterol + NADP(+). The protein operates within steroid biosynthesis; zymosterol biosynthesis; zymosterol from lanosterol: step 5/6. 3-keto-steroid reductase; part of the third module of ergosterol biosynthesis pathway that includes the late steps of the pathway. ERG27 is a catalytic component of the C-4 demethylation complex that catalyzes the reduction of the keto group on the C-3. The third module or late pathway involves the ergosterol synthesis itself through consecutive reactions that mainly occur in the endoplasmic reticulum (ER) membrane. Firstly, the squalene synthase ERG9 catalyzes the condensation of 2 farnesyl pyrophosphate moieties to form squalene, which is the precursor of all steroids. Squalene synthase is crucial for balancing the incorporation of farnesyl diphosphate (FPP) into sterol and nonsterol isoprene synthesis. Secondly, the squalene epoxidase ERG1 catalyzes the stereospecific oxidation of squalene to (S)-2,3-epoxysqualene, which is considered to be a rate-limiting enzyme in steroid biosynthesis. Then, the lanosterol synthase ERG7 catalyzes the cyclization of (S)-2,3 oxidosqualene to lanosterol, a reaction that forms the sterol core. In the next steps, lanosterol is transformed to zymosterol through a complex process involving various demethylation, reduction and desaturation reactions. The lanosterol 14-alpha-demethylase ERG11 (also known as CYP51) catalyzes C14-demethylation of lanosterol to produce 4,4'-dimethyl cholesta-8,14,24-triene-3-beta-ol, which is critical for ergosterol biosynthesis. The C-14 reductase ERG24 reduces the C14=C15 double bond of 4,4-dimethyl-cholesta-8,14,24-trienol to produce 4,4-dimethyl-cholesta-8,24-dienol. 4,4-dimethyl-cholesta-8,24-dienol is substrate of the C-4 demethylation complex ERG25-ERG26-ERG27 in which ERG25 catalyzes the three-step monooxygenation required for the demethylation of 4,4-dimethyl and 4alpha-methylsterols, ERG26 catalyzes the oxidative decarboxylation that results in a reduction of the 3-beta-hydroxy group at the C-3 carbon to an oxo group, and ERG27 is responsible for the reduction of the keto group on the C-3. ERG28 has a role as a scaffold to help anchor ERG25, ERG26 and ERG27 to the endoplasmic reticulum and ERG29 regulates the activity of the iron-containing C4-methylsterol oxidase ERG25. Then, the sterol 24-C-methyltransferase ERG6 catalyzes the methyl transfer from S-adenosyl-methionine to the C-24 of zymosterol to form fecosterol. The C-8 sterol isomerase ERG2 catalyzes the reaction which results in unsaturation at C-7 in the B ring of sterols and thus converts fecosterol to episterol. The sterol-C5-desaturase ERG3 then catalyzes the introduction of a C-5 double bond in the B ring to produce 5-dehydroepisterol. The C-22 sterol desaturase ERG5 further converts 5-dehydroepisterol into ergosta-5,7,22,24(28)-tetraen-3beta-ol by forming the C-22(23) double bond in the sterol side chain. Finally, ergosta-5,7,22,24(28)-tetraen-3beta-ol is substrate of the C-24(28) sterol reductase ERG4 to produce ergosterol. Functionally, facilitates the association of ERG7 with lipid particles preventing its digestion in the endoplasmic reticulum and the lipid particles. The chain is 3-keto-steroid reductase ERG27 from Candida albicans (strain SC5314 / ATCC MYA-2876) (Yeast).